Consider the following 200-residue polypeptide: Small ribosomal subunit protein uS4 (200 aa).

Residues 1–43 (MARYTGPRGRRDRRAGVMLSSMRKNPLEKKPYPPGEHGRDRQR) are disordered. A compositionally biased stretch (basic and acidic residues) spans 25–43 (NPLEKKPYPPGEHGRDRQR). In terms of domain architecture, S4 RNA-binding spans 92–158 (LRMDNVVYRM…QPIQEAVEQV (67 aa)).

It belongs to the universal ribosomal protein uS4 family. As to quaternary structure, part of the 30S ribosomal subunit. Contacts protein S5. The interaction surface between S4 and S5 is involved in control of translational fidelity.

Its function is as follows. One of the primary rRNA binding proteins, it binds directly to 16S rRNA where it nucleates assembly of the body of the 30S subunit. Functionally, with S5 and S12 plays an important role in translational accuracy. In Rubrobacter xylanophilus (strain DSM 9941 / JCM 11954 / NBRC 16129 / PRD-1), this protein is Small ribosomal subunit protein uS4.